Consider the following 120-residue polypeptide: Reprimo-like protein (120 aa).

A helical membrane pass occupies residues V67–L87. A Phosphoserine modification is found at S109.

It belongs to the reprimo family.

The protein resides in the membrane. The sequence is that of Reprimo-like protein (RPRML) from Homo sapiens (Human).